A 77-amino-acid polypeptide reads, in one-letter code: uncharacterized protein (77 aa).

This is an uncharacterized protein from Bacillus subtilis (strain 168).